Consider the following 129-residue polypeptide: MLSYCLLVTGPAYGTQQASSALQFAQALLAEGHRLKSVFFYREGVLNANQLTSPANDEFDLVRAWQLLGETHQVALNVCVAAALRRGVTDAQQAAQLNLAGANLQPGFVLSGLGELAQSVLTCDRVIQF.

Catalysis depends on C79, which acts as the Cysteine persulfide intermediate.

The protein belongs to the DsrE/TusD family. Heterohexamer, formed by a dimer of trimers. The hexameric TusBCD complex contains 2 copies each of TusB, TusC and TusD. The TusBCD complex interacts with TusE.

It localises to the cytoplasm. Functionally, part of a sulfur-relay system required for 2-thiolation of 5-methylaminomethyl-2-thiouridine (mnm(5)s(2)U) at tRNA wobble positions. Accepts sulfur from TusA and transfers it in turn to TusE. This is Sulfurtransferase TusD from Pectobacterium carotovorum subsp. carotovorum (strain PC1).